Consider the following 334-residue polypeptide: Ornithine carbamoyltransferase, catabolic (334 aa).

Carbamoyl phosphate contacts are provided by residues 57–60, glutamine 84, arginine 108, and 135–138; these read STRT and HPTQ. L-ornithine is bound by residues asparagine 168, aspartate 232, and 236–237; that span reads SM. Residues 274-275 and arginine 321 each bind carbamoyl phosphate; that span reads CL.

The protein belongs to the aspartate/ornithine carbamoyltransferase superfamily. OTCase family.

Its subcellular location is the cytoplasm. The enzyme catalyses carbamoyl phosphate + L-ornithine = L-citrulline + phosphate + H(+). It participates in amino-acid degradation; L-arginine degradation via ADI pathway; carbamoyl phosphate from L-arginine: step 2/2. Its function is as follows. Reversibly catalyzes the transfer of the carbamoyl group from carbamoyl phosphate (CP) to the N(epsilon) atom of ornithine (ORN) to produce L-citrulline. This is Ornithine carbamoyltransferase, catabolic (arcB) from Avibacterium paragallinarum (Haemophilus gallinarum).